The primary structure comprises 52 residues: Defensin-like protein 2B (52 aa).

Intrachain disulfides connect C4–C52, C16–C37, C22–C46, and C26–C48.

In terms of assembly, forms oligomers in its native state.

Possesses antifungal activity sensitive to inorganic cations. In Sinapis alba (White mustard), this protein is Defensin-like protein 2B.